A 145-amino-acid polypeptide reads, in one-letter code: Transcription antitermination protein NusB (145 aa).

It belongs to the NusB family.

Functionally, involved in transcription antitermination. Required for transcription of ribosomal RNA (rRNA) genes. Binds specifically to the boxA antiterminator sequence of the ribosomal RNA (rrn) operons. This Paraburkholderia phymatum (strain DSM 17167 / CIP 108236 / LMG 21445 / STM815) (Burkholderia phymatum) protein is Transcription antitermination protein NusB.